A 370-amino-acid polypeptide reads, in one-letter code: MEGVDLLGFLIITLNCNVTMXGKLWFVLTMLLRMLVIVLAGRPVYQDEQERFVCNTLQPGCANVCYDVFSPVSHLRFWLIQGVCVLLPSAVFSVYVLHRGATLAALGPRRCPEPRDTASGQRRCPGSCRERGGLEVPDFSAGYIIHLLLRTLLEAAFGALNYLLFGFLAPNKFPCTRPPCTGVVDCYVSRPTEKSLLMLFLWAVSALSFLLGLADLVCSLRRLMRRRPGPPTSPSIRKQSGAPGHPEGRPTDKEGGREQEGAPAPPVARAGGEGAGSPRVTSRVSGHTKIPDEDASEVTSSASEKLGRQPRGRPYREAAQDPRGSGSEEQPSAAPSHLAAHPSCSRLQPPDPPASSVGAPHLRARKSEWV.

Residues 1–19 (MEGVDLLGFLIITLNCNVT) are Cytoplasmic-facing. The helical transmembrane segment at 20–40 (MXGKLWFVLTMLLRMLVIVLA) threads the bilayer. The Extracellular portion of the chain corresponds to 41–76 (GRPVYQDEQERFVCNTLQPGCANVCYDVFSPVSHLR). The chain crosses the membrane as a helical span at residues 77-97 (FWLIQGVCVLLPSAVFSVYVL). Over 98 to 146 (HRGATLAALGPRRCPEPRDTASGQRRCPGSCRERGGLEVPDFSAGYIIH) the chain is Cytoplasmic. Residues 147-167 (LLLRTLLEAAFGALNYLLFGF) traverse the membrane as a helical segment. Topologically, residues 168–196 (LAPNKFPCTRPPCTGVVDCYVSRPTEKSL) are extracellular. A helical transmembrane segment spans residues 197–217 (LMLFLWAVSALSFLLGLADLV). Over 218–370 (CSLRRLMRRR…HLRARKSEWV (153 aa)) the chain is Cytoplasmic. Positions 227–370 (RPGPPTSPSI…HLRARKSEWV (144 aa)) are disordered. The segment covering 246 to 260 (PEGRPTDKEGGREQE) has biased composition (basic and acidic residues). Residues 331-345 (PSAAPSHLAAHPSCS) show a composition bias toward low complexity.

The protein belongs to the connexin family. Delta-type subfamily. As to quaternary structure, a connexon is composed of a hexamer of connexins.

It localises to the cell membrane. The protein resides in the cell junction. It is found in the gap junction. One gap junction consists of a cluster of closely packed pairs of transmembrane channels, the connexons, through which materials of low MW diffuse from one cell to a neighboring cell. This is Gap junction delta-4 protein (GJD4) from Macaca fascicularis (Crab-eating macaque).